The sequence spans 133 residues: S-protein homolog 9 (133 aa).

An N-terminal signal peptide occupies residues 1–20; the sequence is MNRLSCFLLVIGLCIGLSNA.

This sequence belongs to the plant self-incompatibility (S1) protein family.

The protein resides in the secreted. The polypeptide is S-protein homolog 9 (Arabidopsis thaliana (Mouse-ear cress)).